A 266-amino-acid polypeptide reads, in one-letter code: Outer membrane protein OmpK (266 aa).

An N-terminal signal peptide occupies residues M1–A20.

Belongs to the nucleoside-specific channel-forming outer membrane porin (Tsx) (TC 1.B.10) family.

The protein localises to the cell outer membrane. Serves as receptor for a broad-host-range vibriophage, KVP40. The protein is Outer membrane protein OmpK (ompK) of Vibrio parahaemolyticus serotype O3:K6 (strain RIMD 2210633).